The following is a 317-amino-acid chain: Heme-binding protein HMX1 (317 aa).

Over 1–289 (MEDSSNTIIP…FNKDSATRRA (289 aa)) the chain is Cytoplasmic. Residues 290-310 (LHTVMLLVLSIIAIWVLYFLV) form a helical; Anchor for type IV membrane protein membrane-spanning segment.

Requires heme as cofactor.

Its subcellular location is the endoplasmic reticulum membrane. Its function is as follows. Plays an important role in the degradation of heme under conditions of iron deprivation. The chain is Heme-binding protein HMX1 (HMX1) from Saccharomyces cerevisiae (strain ATCC 204508 / S288c) (Baker's yeast).